We begin with the raw amino-acid sequence, 357 residues long: MTAATAQRIGQGSRSSKEDRDRRLVRYWLYAVFVVLIAIVMVGGATRMTGSGLSITEWKPIHGVIPPLNHAEWLEEFDKYRQIPQYQQINKGMSLEAFQSIFWWEWAHRMLARFVGFLVAVPLAFFWVTGRLKGGLKYRMLGLLALGGLQGAIGWWMVASGLSELTSVSQYRLAIHLTTACIIITAVFYIARGLVTYSERPAERSIQRFAGWIVFAVLVQIYLGGLVAGLHAGLTYNTWPLMDGAVIPSDLFIQSPWWRNLFENPKTVQFVHRMFAYTVLVLTVLHSLQVWKQVPGTTHARRTIVLVGLVLIQAVIGIATLLMSVPLHLGLTHQFFALIVLAFAVAHWRATKGAYEG.

Helical transmembrane passes span 24-44 (LVRY…MVGG), 110-130 (MLAR…WVTG), 140-160 (MLGL…MVAS), 175-195 (IHLT…RGLV), and 209-229 (FAGW…LVAG). Histidine 272 is a binding site for heme. 3 helical membrane-spanning segments follow: residues 274–294 (MFAY…WKQV), 303–323 (TIVL…TLLM), and 325–345 (VPLH…AFAV). Histidine 333 contacts heme.

Belongs to the COX15/CtaA family. Type 2 subfamily. In terms of assembly, interacts with CtaB. Requires heme b as cofactor.

It localises to the cell membrane. The enzyme catalyses Fe(II)-heme o + 2 A + H2O = Fe(II)-heme a + 2 AH2. It participates in porphyrin-containing compound metabolism; heme A biosynthesis; heme A from heme O: step 1/1. Its function is as follows. Catalyzes the conversion of heme O to heme A by two successive hydroxylations of the methyl group at C8. The first hydroxylation forms heme I, the second hydroxylation results in an unstable dihydroxymethyl group, which spontaneously dehydrates, resulting in the formyl group of heme A. This Brucella anthropi (strain ATCC 49188 / DSM 6882 / CCUG 24695 / JCM 21032 / LMG 3331 / NBRC 15819 / NCTC 12168 / Alc 37) (Ochrobactrum anthropi) protein is Heme A synthase.